We begin with the raw amino-acid sequence, 527 residues long: Putative ABC transporter peptide-binding protein BOV_A0352 (527 aa).

A signal peptide spans 1-23 (MRLRNFYSALALSAAVFAGPLYA).

Belongs to the bacterial solute-binding protein 5 family. In terms of assembly, the complex is composed of two ATP-binding proteins (BOV_A0347 and BOV_A0348), two transmembrane proteins (BOV_A0350 and BOV_A0351) and a solute-binding protein (BOV_A0352).

The protein resides in the periplasm. Probably part of an ABC transporter complex that could be involved in peptide import. The polypeptide is Putative ABC transporter peptide-binding protein BOV_A0352 (Brucella ovis (strain ATCC 25840 / 63/290 / NCTC 10512)).